A 334-amino-acid polypeptide reads, in one-letter code: Transcription factor TGA2.1 (334 aa).

Residues 1-13 (MADASSRTDTSIV) are compositionally biased toward polar residues. Positions 1 to 49 (MADASSRTDTSIVVDNDDKNHQLENGHSGAVMASNSSDRSDRSDKLMDQ) are disordered. Over residues 38-49 (DRSDRSDKLMDQ) the composition is skewed to basic and acidic residues. Residues 48-92 (DQKTIRRLAQNREAARKSRLRKKAYVQQLESSKLKLAQLEQELQK) form the bZIP domain. The tract at residues 50–70 (KTIRRLAQNREAARKSRLRKK) is basic motif. Positions 76-90 (LESSKLKLAQLEQEL) are leucine-zipper. Positions 115–331 (ALTFDLEYTR…RALSSLWLAR (217 aa)) constitute a DOG1 domain.

It belongs to the bZIP family. As to quaternary structure, interacts with NPR1/NH1 and NPR3/NH3.

It localises to the nucleus. In terms of biological role, plays a negative role in rice basal defense responses to the bacterial blight pathogen Xanthomomas oryzae pv. oryzae (Xoo). May function in both positive and negative regulation of rice defense genes. Binds DNA in vitro. Acts as a transcriptional activator when bound to NPR1/NH1 in vitro. Binds to the promoter sequence of CRK10 in vitro. The chain is Transcription factor TGA2.1 from Oryza sativa subsp. japonica (Rice).